We begin with the raw amino-acid sequence, 486 residues long: Glutamyl-tRNA(Gln) amidotransferase subunit A (486 aa).

Catalysis depends on charge relay system residues K80 and S155. The active-site Acyl-ester intermediate is S179.

It belongs to the amidase family. GatA subfamily. Heterotrimer of A, B and C subunits.

The catalysed reaction is L-glutamyl-tRNA(Gln) + L-glutamine + ATP + H2O = L-glutaminyl-tRNA(Gln) + L-glutamate + ADP + phosphate + H(+). Its function is as follows. Allows the formation of correctly charged Gln-tRNA(Gln) through the transamidation of misacylated Glu-tRNA(Gln) in organisms which lack glutaminyl-tRNA synthetase. The reaction takes place in the presence of glutamine and ATP through an activated gamma-phospho-Glu-tRNA(Gln). The protein is Glutamyl-tRNA(Gln) amidotransferase subunit A of Geobacillus sp. (strain WCH70).